A 231-amino-acid chain; its full sequence is DNA mismatch repair protein MutH (231 aa).

Belongs to the MutH family.

Its subcellular location is the cytoplasm. Functionally, sequence-specific endonuclease that cleaves unmethylated GATC sequences. It is involved in DNA mismatch repair. The protein is DNA mismatch repair protein MutH of Salmonella enteritidis PT4 (strain P125109).